The primary structure comprises 168 residues: Cytochrome c oxidase subunit 2 (168 aa).

Residues 1 to 3 are Cytoplasmic-facing; sequence MVD. Residues 4-38 traverse the membrane as a helical segment; sequence EHKAHKAILAYEKGWLAFSLAMLFVFIALIAYTLA. The Periplasmic portion of the chain corresponds to 39 to 168; that stretch reads THTAGVIPAG…NMFGTIVVKE (130 aa). Positions 114, 149, 153, and 157 each coordinate Cu cation.

It belongs to the cytochrome c oxidase subunit 2 family.

The protein localises to the cell membrane. The enzyme catalyses 4 Fe(II)-[cytochrome c] + O2 + 8 H(+)(in) = 4 Fe(III)-[cytochrome c] + 2 H2O + 4 H(+)(out). In terms of biological role, subunits I and II form the functional core of the enzyme complex. Electrons originating in cytochrome c are transferred via heme a and Cu(A) to the binuclear center formed by heme a3 and Cu(B). This chain is Cytochrome c oxidase subunit 2 (cbaB), found in Thermus thermophilus (strain ATCC 27634 / DSM 579 / HB8).